The following is a 210-amino-acid chain: Urease accessory protein UreF (210 aa).

The protein belongs to the UreF family. UreD, UreF and UreG form a complex that acts as a GTP-hydrolysis-dependent molecular chaperone, activating the urease apoprotein by helping to assemble the nickel containing metallocenter of UreC. The UreE protein probably delivers the nickel.

Its subcellular location is the cytoplasm. In terms of biological role, required for maturation of urease via the functional incorporation of the urease nickel metallocenter. The protein is Urease accessory protein UreF of Cereibacter sphaeroides (strain ATCC 17025 / ATH 2.4.3) (Rhodobacter sphaeroides).